We begin with the raw amino-acid sequence, 466 residues long: 3-isopropylmalate dehydratase large subunit (466 aa).

[4Fe-4S] cluster is bound by residues Cys-347, Cys-407, and Cys-410.

The protein belongs to the aconitase/IPM isomerase family. LeuC type 1 subfamily. As to quaternary structure, heterodimer of LeuC and LeuD. Requires [4Fe-4S] cluster as cofactor.

The catalysed reaction is (2R,3S)-3-isopropylmalate = (2S)-2-isopropylmalate. Its pathway is amino-acid biosynthesis; L-leucine biosynthesis; L-leucine from 3-methyl-2-oxobutanoate: step 2/4. In terms of biological role, catalyzes the isomerization between 2-isopropylmalate and 3-isopropylmalate, via the formation of 2-isopropylmaleate. The protein is 3-isopropylmalate dehydratase large subunit of Shewanella woodyi (strain ATCC 51908 / MS32).